A 242-amino-acid polypeptide reads, in one-letter code: Uridylate kinase (242 aa).

16-19 (KVSG) serves as a coordination point for ATP. UMP is bound at residue G58. Residues G59 and R63 each coordinate ATP. Residues D78 and 139 to 146 (TGNPFCTT) each bind UMP. T166, Q167, Y172, and D175 together coordinate ATP.

It belongs to the UMP kinase family. As to quaternary structure, homohexamer.

The protein localises to the cytoplasm. It carries out the reaction UMP + ATP = UDP + ADP. It functions in the pathway pyrimidine metabolism; CTP biosynthesis via de novo pathway; UDP from UMP (UMPK route): step 1/1. With respect to regulation, inhibited by UTP. In terms of biological role, catalyzes the reversible phosphorylation of UMP to UDP. In Rickettsia massiliae (strain Mtu5), this protein is Uridylate kinase.